The sequence spans 284 residues: Bifunctional protein FolD (284 aa).

Residues 165–167 (GRS), Ser190, and Ile231 each bind NADP(+).

This sequence belongs to the tetrahydrofolate dehydrogenase/cyclohydrolase family. In terms of assembly, homodimer.

The catalysed reaction is (6R)-5,10-methylene-5,6,7,8-tetrahydrofolate + NADP(+) = (6R)-5,10-methenyltetrahydrofolate + NADPH. It catalyses the reaction (6R)-5,10-methenyltetrahydrofolate + H2O = (6R)-10-formyltetrahydrofolate + H(+). The protein operates within one-carbon metabolism; tetrahydrofolate interconversion. Its function is as follows. Catalyzes the oxidation of 5,10-methylenetetrahydrofolate to 5,10-methenyltetrahydrofolate and then the hydrolysis of 5,10-methenyltetrahydrofolate to 10-formyltetrahydrofolate. The polypeptide is Bifunctional protein FolD (Clostridium kluyveri (strain ATCC 8527 / DSM 555 / NBRC 12016 / NCIMB 10680 / K1)).